The following is a 42-amino-acid chain: Photosystem II reaction center protein J (42 aa).

A helical transmembrane segment spans residues 10–30 (IPLWLVGTVAGTAAIGLLGIF).

The protein belongs to the PsbJ family. In terms of assembly, PSII is composed of 1 copy each of membrane proteins PsbA, PsbB, PsbC, PsbD, PsbE, PsbF, PsbH, PsbI, PsbJ, PsbK, PsbL, PsbM, PsbT, PsbX, PsbY, PsbZ, Psb30/Ycf12, at least 3 peripheral proteins of the oxygen-evolving complex and a large number of cofactors. It forms dimeric complexes.

The protein resides in the plastid. It is found in the chloroplast thylakoid membrane. Its function is as follows. One of the components of the core complex of photosystem II (PSII). PSII is a light-driven water:plastoquinone oxidoreductase that uses light energy to abstract electrons from H(2)O, generating O(2) and a proton gradient subsequently used for ATP formation. It consists of a core antenna complex that captures photons, and an electron transfer chain that converts photonic excitation into a charge separation. The protein is Photosystem II reaction center protein J of Pleurastrum terricola (Filamentous green alga).